The chain runs to 60 residues: U-actitoxin-Avd12b (60 aa).

The first 6 residues, serine 1–serine 6, serve as a signal peptide directing secretion. Residues tyrosine 7–asparagine 12 constitute a propeptide that is removed on maturation. In terms of domain architecture, EGF-like spans glutamate 14 to glutamate 56. 3 disulfides stabilise this stretch: cysteine 18–cysteine 33, cysteine 27–cysteine 44, and cysteine 46–cysteine 55.

This sequence belongs to the EGF domain peptide family.

The protein resides in the secreted. It is found in the nematocyst. In terms of biological role, has both toxic and EGF activity. Its EGF activity consists of rounding cells (morphological change) and inducing tyrosine phosphorylation of the EGFR in A431 cells, but with a lower potency that human EGF. In Anemonia viridis (Snakelocks anemone), this protein is U-actitoxin-Avd12b.